The primary structure comprises 465 residues: Siroheme synthase (465 aa).

The tract at residues 1–203 (MDFLPLFHSL…GRPAEAERLL (203 aa)) is precorrin-2 dehydrogenase /sirohydrochlorin ferrochelatase. Residues 22-23 (EV) and 43-44 (PQ) contribute to the NAD(+) site. At Ser128 the chain carries Phosphoserine. Residues 217–465 (GEVYLVGAGP…AWFEGAREDA (249 aa)) form a uroporphyrinogen-III C-methyltransferase region. Pro226 provides a ligand contact to S-adenosyl-L-methionine. Asp249 (proton acceptor) is an active-site residue. Catalysis depends on Lys271, which acts as the Proton donor. S-adenosyl-L-methionine is bound by residues 302 to 304 (GGD), Ile307, 332 to 333 (TA), Met384, and Gly413.

In the N-terminal section; belongs to the precorrin-2 dehydrogenase / sirohydrochlorin ferrochelatase family. It in the C-terminal section; belongs to the precorrin methyltransferase family.

It catalyses the reaction uroporphyrinogen III + 2 S-adenosyl-L-methionine = precorrin-2 + 2 S-adenosyl-L-homocysteine + H(+). It carries out the reaction precorrin-2 + NAD(+) = sirohydrochlorin + NADH + 2 H(+). The catalysed reaction is siroheme + 2 H(+) = sirohydrochlorin + Fe(2+). The protein operates within cofactor biosynthesis; adenosylcobalamin biosynthesis; precorrin-2 from uroporphyrinogen III: step 1/1. It participates in cofactor biosynthesis; adenosylcobalamin biosynthesis; sirohydrochlorin from precorrin-2: step 1/1. Its pathway is porphyrin-containing compound metabolism; siroheme biosynthesis; precorrin-2 from uroporphyrinogen III: step 1/1. It functions in the pathway porphyrin-containing compound metabolism; siroheme biosynthesis; siroheme from sirohydrochlorin: step 1/1. The protein operates within porphyrin-containing compound metabolism; siroheme biosynthesis; sirohydrochlorin from precorrin-2: step 1/1. Its function is as follows. Multifunctional enzyme that catalyzes the SAM-dependent methylations of uroporphyrinogen III at position C-2 and C-7 to form precorrin-2 via precorrin-1. Then it catalyzes the NAD-dependent ring dehydrogenation of precorrin-2 to yield sirohydrochlorin. Finally, it catalyzes the ferrochelation of sirohydrochlorin to yield siroheme. In Pseudomonas aeruginosa (strain ATCC 15692 / DSM 22644 / CIP 104116 / JCM 14847 / LMG 12228 / 1C / PRS 101 / PAO1), this protein is Siroheme synthase.